The following is a 305-amino-acid chain: Ribosomal RNA small subunit methyltransferase H (305 aa).

S-adenosyl-L-methionine is bound by residues 30-32 (GGH), aspartate 49, phenylalanine 74, aspartate 96, and glutamine 103.

This sequence belongs to the methyltransferase superfamily. RsmH family.

The protein localises to the cytoplasm. The enzyme catalyses cytidine(1402) in 16S rRNA + S-adenosyl-L-methionine = N(4)-methylcytidine(1402) in 16S rRNA + S-adenosyl-L-homocysteine + H(+). Its function is as follows. Specifically methylates the N4 position of cytidine in position 1402 (C1402) of 16S rRNA. The chain is Ribosomal RNA small subunit methyltransferase H from Francisella tularensis subsp. tularensis (strain FSC 198).